Here is a 248-residue protein sequence, read N- to C-terminus: L-seryl-tRNA(Sec) kinase (248 aa).

Residue 7–14 (GLPGVGKS) coordinates ATP.

This sequence belongs to the L-seryl-tRNA(Sec) kinase family.

It catalyses the reaction L-seryl-tRNA(Sec) + ATP = O-phospho-L-seryl-tRNA(Sec) + ADP. It participates in aminoacyl-tRNA biosynthesis; selenocysteinyl-tRNA(Sec) biosynthesis; selenocysteinyl-tRNA(Sec) from L-seryl-tRNA(Sec) (archaeal/eukaryal route): step 1/2. Its function is as follows. Specifically phosphorylates seryl-tRNA(Sec) to O-phosphoseryl-tRNA(Sec), an activated intermediate for selenocysteine biosynthesis. This chain is L-seryl-tRNA(Sec) kinase (pstK), found in Methanocaldococcus jannaschii (strain ATCC 43067 / DSM 2661 / JAL-1 / JCM 10045 / NBRC 100440) (Methanococcus jannaschii).